A 592-amino-acid polypeptide reads, in one-letter code: Multidrug transporter AQR1 (592 aa).

Residues 1 to 77 form a disordered region; that stretch reads MVESGPHSIN…EISSTHSQDA (77 aa). The chain crosses the membrane as a helical span at residues 99 to 119; the sequence is WCMVALLTACGFWSSLGSPIY. Asn138 carries N-linked (GlcNAc...) asparagine glycosylation. 5 helical membrane passes run 139–159, 166–186, 188–208, 231–251, and 255–275; these read ITVVVYLLFQGLAPTCSGGLA, PVLLIGMLIYVVASIGLACAP, YGVIVFLRCVQSIGISPSIAI, GFVLLGQAFGSLIGAALAAAW, and AIFWFLTIGCGASFAICFALL. N-linked (GlcNAc...) asparagine glycosylation is present at Asn285. The next 6 helical transmembrane spans lie at 340-360, 374-394, 432-452, 459-479, 497-517, and 523-543; these read IFLSLLPPGLAFAMWTLMLSA, LTIIGVCYLPAGIGGLIGSFA, LQSVLPQNFLCVVTYILFGWS, IPSILITSCVSSFCAMSTLSA, SCFNFMRCSLSAILMGCFAKM, and VGGTFTLLAGLVFVGNFLMFI.

This sequence belongs to the major facilitator superfamily. CAR1 family.

The protein localises to the cell membrane. Its function is as follows. Multidrug transporter acts as a determinant of resistance to acetic acid, flucytosine and clotrimazole, these 3 compounds acting synergistically against the pathogen. Reduces the intracellular accumulation of the antifungal agents flucytosine and, to a moderate extent, of clotrimazole. Its role in acetic acid resistance may be indirect, presumably through the transport of a still unidentified physiological substrate. This is Multidrug transporter AQR1 from Candida glabrata (strain ATCC 2001 / BCRC 20586 / JCM 3761 / NBRC 0622 / NRRL Y-65 / CBS 138) (Yeast).